The following is a 280-amino-acid chain: Phosphonates import ATP-binding protein PhnC 1 (280 aa).

Positions 3–247 constitute an ABC transporter domain; it reads FRLDAASVSY…LLRELYASES (245 aa). 36–43 serves as a coordination point for ATP; the sequence is GPSGAGKT.

This sequence belongs to the ABC transporter superfamily. Phosphonates importer (TC 3.A.1.9.1) family. In terms of assembly, the complex is composed of two ATP-binding proteins (PhnC), two transmembrane proteins (PhnE) and a solute-binding protein (PhnD).

Its subcellular location is the cell inner membrane. The catalysed reaction is phosphonate(out) + ATP + H2O = phosphonate(in) + ADP + phosphate + H(+). Its function is as follows. Part of the ABC transporter complex PhnCDE involved in phosphonates import. Responsible for energy coupling to the transport system. This is Phosphonates import ATP-binding protein PhnC 1 from Cupriavidus necator (strain ATCC 17699 / DSM 428 / KCTC 22496 / NCIMB 10442 / H16 / Stanier 337) (Ralstonia eutropha).